We begin with the raw amino-acid sequence, 175 residues long: Pituitary adenylate cyclase-activating polypeptide (175 aa).

The signal sequence occupies residues 1 to 24 (MTMCSGARLALLVYGIIMHNSVSC). Residues 25 to 78 (SPAAGLSFPGIRPEEEAYDQDGNPLQDFYDWDPPGAGSPASALRDAYALYYPAD) constitute a propeptide that is removed on maturation. Residues 149–157 (VKKYLAAVL) form an important for receptor binding region. At L157 the chain carries Leucine amide. Residue K168 is modified to Lysine amide. Residues 172 to 175 (IAYL) constitute a propeptide that is removed on maturation.

Belongs to the glucagon family.

It is found in the secreted. Functionally, PACAP is a neuropeptide involved in diverse array of physiological processes through activating the PACAP subfamily of class B1 G protein-coupled receptors: VIP receptor 1 (VIPR1), VIP receptor 2 (VIPR2), and PACAP type I receptor (ADCYAP1R1). Exerts neuroprotective and general cytoprotective effects due to anti-apoptotic, anti-inflammatory, and antioxidant actions. Promotes neuron projection development through the RAPGEF2/Rap1/B-Raf/ERK pathway. In chromaffin cells, induces long-lasting increase of intracellular calcium concentrations and neuroendocrine secretion. Involved in the control of glucose homeostasis, induces insulin secretion by pancreatic beta cells. PACAP exists in two bioactive forms from proteolysis of the same precursor protein, PACAP27 and PACAP38, which differ by eleven amino acid residues in the C-terminus. This chain is Pituitary adenylate cyclase-activating polypeptide (Adcyap1), found in Rattus norvegicus (Rat).